We begin with the raw amino-acid sequence, 358 residues long: Microbial Terpene synthase-like protein 13 (358 aa).

Belongs to the terpene synthase family.

Functionally, no terpene synthase activity detected in vitro. The chain is Microbial Terpene synthase-like protein 13 from Selaginella moellendorffii (Spikemoss).